Reading from the N-terminus, the 895-residue chain is Histone-lysine N-methyltransferase EZ3 (895 aa).

A compositionally biased stretch (low complexity) spans methionine 1–glutamine 13. 2 disordered regions span residues methionine 1–serine 30 and serine 396–arginine 446. Residues serine 396 to proline 422 show a composition bias toward polar residues. Basic residues predominate over residues arginine 427–proline 436. One can recognise an SANT domain in the interval threonine 528–alanine 578. A CXC domain is found at alanine 628–aspartate 732. Residues glutamine 747–arginine 862 enclose the SET domain. The segment at alanine 870–arginine 895 is disordered. Residues arginine 873–valine 885 show a composition bias toward basic and acidic residues. The segment covering serine 886 to arginine 895 has biased composition (basic residues).

Belongs to the class V-like SAM-binding methyltransferase superfamily. Histone-lysine methyltransferase family. EZ subfamily. In terms of tissue distribution, widely expressed.

It is found in the nucleus. It carries out the reaction L-lysyl(27)-[histone H3] + 3 S-adenosyl-L-methionine = N(6),N(6),N(6)-trimethyl-L-lysyl(27)-[histone H3] + 3 S-adenosyl-L-homocysteine + 3 H(+). Its function is as follows. Polycomb group (PcG) protein. Catalytic subunit of some PcG multiprotein complex, which methylates 'Lys-27' of histone H3, leading to transcriptional repression of the affected target genes. PcG proteins are not required to initiate repression, but to maintain it during later stages of development. The polypeptide is Histone-lysine N-methyltransferase EZ3 (EZ3) (Zea mays (Maize)).